The chain runs to 180 residues: Nucleoside-triphosphatase THEP1 (180 aa).

Residues 18 to 25 (GRPGVGKT) and 104 to 111 (LVIMDEIG) each bind ATP.

Belongs to the THEP1 NTPase family.

The enzyme catalyses a ribonucleoside 5'-triphosphate + H2O = a ribonucleoside 5'-diphosphate + phosphate + H(+). In terms of biological role, has nucleotide phosphatase activity towards ATP, GTP, CTP, TTP and UTP. May hydrolyze nucleoside diphosphates with lower efficiency. This is Nucleoside-triphosphatase THEP1 from Metallosphaera sedula (strain ATCC 51363 / DSM 5348 / JCM 9185 / NBRC 15509 / TH2).